Reading from the N-terminus, the 292-residue chain is Rab effector Noc2 (292 aa).

The RabBD domain maps to 41-158 (QRKSQSLSPA…KRSGAWFYKG (118 aa)). The segment at 89–146 (GNGLSQCLLCGEVLGFLGSSSVFCKDCRKKVCTKCGIEASPSQKRPLWLCKICSEQRE) adopts an FYVE-type zinc-finger fold. Zn(2+) contacts are provided by cysteine 95, cysteine 98, cysteine 112, cysteine 115, cysteine 120, cysteine 123, cysteine 138, and cysteine 141. The segment at 175–292 (PSFRPLPVEP…RTLAGPRGPR (118 aa)) is disordered. Positions 221–235 (LDDRLRPAGVRDPKG) are enriched in basic and acidic residues. Phosphoserine is present on serine 248. Low complexity predominate over residues 257–269 (ASCLSGSQSSLAS).

In terms of assembly, recruited to dense-core vesicles through specific interaction with RAB27A in endocrine cells. Interacts with RAB3A, RAB3B, RAB3C and RAB3D. Interacts with ZYX.

Its subcellular location is the cytoplasm. The protein localises to the cytoplasmic vesicle. It is found in the secretory vesicle membrane. Its function is as follows. Rab GTPase effector involved in the late steps of regulated exocytosis, both in endocrine and exocrine cells. The protein is Rab effector Noc2 (RPH3AL) of Bos taurus (Bovine).